The sequence spans 319 residues: Histidinol-phosphate aminotransferase 1 (319 aa).

Position 182 is an N6-(pyridoxal phosphate)lysine (lysine 182).

It belongs to the class-II pyridoxal-phosphate-dependent aminotransferase family. Histidinol-phosphate aminotransferase subfamily. Pyridoxal 5'-phosphate serves as cofactor.

It catalyses the reaction L-histidinol phosphate + 2-oxoglutarate = 3-(imidazol-4-yl)-2-oxopropyl phosphate + L-glutamate. It functions in the pathway amino-acid biosynthesis; L-histidine biosynthesis; L-histidine from 5-phospho-alpha-D-ribose 1-diphosphate: step 7/9. The sequence is that of Histidinol-phosphate aminotransferase 1 (hisC1) from Archaeoglobus fulgidus (strain ATCC 49558 / DSM 4304 / JCM 9628 / NBRC 100126 / VC-16).